Reading from the N-terminus, the 145-residue chain is Transcriptional regulator ZitR (145 aa).

One can recognise an HTH marR-type domain in the interval 1 to 142; the sequence is MSLANQIDQF…ISQFLSVLTE (142 aa). Zn(2+) contacts are provided by glutamate 23, cysteine 29, glutamate 40, and histidine 41. The H-T-H motif DNA-binding region spans 53–76; that stretch reads NARIAEQLKISPAAVTKALKKLQE. Zn(2+) contacts are provided by glutamate 106, histidine 107, and histidine 111.

As to quaternary structure, homodimer.

With respect to regulation, zinc acts as a corepressor and is required for DNA-binding activity. Binds up to two zinc ligands per monomer. Inactive under zinc deprivation. In terms of biological role, zinc-responsive regulator that represses expression of the zit operon in the presence of zinc. Acts by binding two palindromic operator sites overlapping the -35 and -10 boxes of the zit promoter. Could be a sensitive sensor of intracellular zinc to efficiently respond to zinc variations in the environment. This is Transcriptional regulator ZitR (zitR) from Lactococcus lactis subsp. cremoris (strain MG1363).